Consider the following 1174-residue polypeptide: Protein kinase C-like (1174 aa).

One can recognise an REM-1 1 domain in the interval 1–68 (MANVEETVAN…LRDLDLQRTT (68 aa)). A compositionally biased stretch (polar residues) spans 69–84 (SGVDNMSLQPGRSPTN). A disordered region spans residues 69–140 (SGVDNMSLQP…PPPATANKRP (72 aa)). Low complexity predominate over residues 96–123 (GYAQQDQGGYGGPQSQYSQLSGGEALQP). Pro residues predominate over residues 124–134 (PRAPFAAPPPA). The REM-1 2 domain occupies 149-226 (KYDTPHLGPR…LKRYEDLHVD (78 aa)). The C2 domain occupies 229–349 (GDGDDNDSLD…MRRKKLETEL (121 aa)). The segment at 358–406 (DKMGGHTGIQPDMQFQPPPGQSPAGGPGGGPTPAGVRPPGAPQPQTGPI) is disordered. Residues 380–389 (PAGGPGGGPT) show a composition bias toward gly residues. 2 consecutive Phorbol-ester/DAG-type zinc fingers follow at residues 458 to 506 (GHKF…VTKC) and 526 to 576 (PHRF…PDFC). The disordered stretch occupies residues 593–842 (TRRGQSSSGP…PAANTQGTGK (250 aa)). The segment covering 596 to 611 (GQSSSGPGMSQRTLRP) has biased composition (polar residues). A compositionally biased stretch (low complexity) spans 624-636 (QSPGQPGQESPTQ). Residues 648–657 (SPPPGPPRQP) are compositionally biased toward pro residues. Residues 658–709 (SYPSSATSVDAARASYSTTGTASTGAPTSPTSGSRPPSGPRTQSSVAAAAAA) are compositionally biased toward low complexity. Positions 720–744 (RSNTDYSPQSGRSSGSGYPTEQRMS) are enriched in polar residues. The segment covering 786–802 (LPQPPPPQSPPQHPQQP) has biased composition (pro residues). Residues 808–820 (KMPEQQALTQQPP) are compositionally biased toward polar residues. A Protein kinase domain is found at 849-1108 (FNFLAVLGKG…AQEIMSHAFF (260 aa)). Residues 855–863 (LGKGNFGKV) and Lys878 each bind ATP. The active-site Proton acceptor is Asp974. Positions 1109–1174 (RNINWDDIYH…RGFSYSADFA (66 aa)) constitute an AGC-kinase C-terminal domain.

This sequence belongs to the protein kinase superfamily. AGC Ser/Thr protein kinase family. PKC subfamily.

The catalysed reaction is L-seryl-[protein] + ATP = O-phospho-L-seryl-[protein] + ADP + H(+). It carries out the reaction L-threonyl-[protein] + ATP = O-phospho-L-threonyl-[protein] + ADP + H(+). This Cochliobolus heterostrophus (Southern corn leaf blight fungus) protein is Protein kinase C-like (PKC1).